Here is a 115-residue protein sequence, read N- to C-terminus: Somatostatin-2 (115 aa).

Positions 1–18 are cleaved as a signal peptide; it reads MKVCRIHCALALLGLALA. Residues 19–87 constitute a propeptide that is removed on maturation; sequence ICSQGAASQP…KEDLRVELER (69 aa). Cysteine 104 and cysteine 115 form a disulfide bridge.

It belongs to the somatostatin family.

Its subcellular location is the secreted. Somatostatin inhibits the release of somatotropin. This Oncorhynchus mykiss (Rainbow trout) protein is Somatostatin-2 (sst2).